Consider the following 170-residue polypeptide: Fimbrial protein (170 aa).

Residues 1–7 (MNTLQKG) constitute a propeptide, leader sequence. Phenylalanine 8 is subject to N-methylphenylalanine. A helical transmembrane segment spans residues 8 to 28 (FTLIELMIVIAIVGILAAVAL). O-linked (Gal...) serine glycosylation occurs at serine 70. Serine 100 bears the O-(sn-1-glycerophosphoryl)serine mark. The cysteines at positions 127 and 163 are disulfide-linked.

This sequence belongs to the N-Me-Phe pilin family. In terms of assembly, the pili are polar flexible filaments of about 5.4 nanometers diameter and 2.5 micrometers average length; they consist of only a single polypeptide chain arranged in a helical configuration of five subunits per turn in the assembled pilus. Post-translationally, O-linked glycan has been reported to consist either of the Gal(alpha1-3) GlcNAc disaccharide, or the Gal(beta 1-4) Gal(alpha 1-3) 2,4-diacetamido-2,4,6-trideoxyhexose trisaccharide.

It is found in the fimbrium. It localises to the membrane. Its function is as follows. Major component of the type IV pilus (T4P) that plays a role in cellular adherence, microcolony formation as well as twitching motility. The polypeptide is Fimbrial protein (pilE) (Neisseria meningitidis serogroup B (strain ATCC BAA-335 / MC58)).